Reading from the N-terminus, the 1741-residue chain is Meiosis regulator and mRNA stability factor 1 (1741 aa).

An NYN domain is found at 345-482 (IGVFWDIENC…ALLHHAHELV (138 aa)). 3 disordered regions span residues 594–636 (KVKS…GSVI), 659–678 (TENHQEHLREIPSQNNSHAA), and 683–716 (LTTKKSGVGESSCKSSYKKETSVSRSMTNSPVDK). Over residues 659 to 668 (TENHQEHLRE) the composition is skewed to basic and acidic residues. Residues 788 to 867 (ADIQISNIDY…KRIQVSLATG (80 aa)) enclose the RRM domain. 8 HTH OST-type domains span residues 872 to 946 (SLSL…SPLG), 1000 to 1076 (SLKT…HNKP), 1097 to 1171 (QLIQ…LTHR), 1173 to 1248 (QVKR…IPKR), 1257 to 1332 (RTKQ…TEVE), 1333 to 1408 (QVKA…INRK), 1409 to 1483 (SLRT…VRLT), and 1484 to 1558 (NLYM…LKND). Positions 1684-1700 (KLTSGSVASSTAENTSV) are enriched in polar residues. The segment at 1684-1727 (KLTSGSVASSTAENTSVPPRHSSETQLNKEAMDSPAKKQHKNKV) is disordered.

The protein localises to the peroxisome. Essential regulator of oogenesis required for female meiotic progression to repress transposable elements and preventing their mobilization, which is essential for the germline integrity. This Gallus gallus (Chicken) protein is Meiosis regulator and mRNA stability factor 1.